Reading from the N-terminus, the 435-residue chain is 3-ketoacyl-CoA thiolase (435 aa).

Catalysis depends on C98, which acts as the Acyl-thioester intermediate. Catalysis depends on proton acceptor residues H391 and C421.

This sequence belongs to the thiolase-like superfamily. Thiolase family. In terms of assembly, heterotetramer of two alpha chains (FadJ) and two beta chains (FadI).

It is found in the cytoplasm. The catalysed reaction is an acyl-CoA + acetyl-CoA = a 3-oxoacyl-CoA + CoA. It participates in lipid metabolism; fatty acid beta-oxidation. Catalyzes the final step of fatty acid oxidation in which acetyl-CoA is released and the CoA ester of a fatty acid two carbons shorter is formed. This is 3-ketoacyl-CoA thiolase from Vibrio vulnificus (strain YJ016).